The primary structure comprises 45 residues: AESTVKQAPVXAVAKAYNDYEEYSLGPEGLKDAMEXTGSNALVMD.

In terms of assembly, one of 3 components (of 35, 45 and 105 kDa) of the enterotoxin.

Functionally, one of 3 components required for cytotoxicity (tested in African green monkey Vero cells); the complex is not hemolytic. The polypeptide is Enterotoxin (Bacillus cereus).